Consider the following 396-residue polypeptide: NADH-quinone oxidoreductase subunit D (396 aa).

This sequence belongs to the complex I 49 kDa subunit family. As to quaternary structure, NDH-1 is composed of 14 different subunits. Subunits NuoB, C, D, E, F, and G constitute the peripheral sector of the complex.

It is found in the cell inner membrane. The catalysed reaction is a quinone + NADH + 5 H(+)(in) = a quinol + NAD(+) + 4 H(+)(out). NDH-1 shuttles electrons from NADH, via FMN and iron-sulfur (Fe-S) centers, to quinones in the respiratory chain. The immediate electron acceptor for the enzyme in this species is believed to be ubiquinone. Couples the redox reaction to proton translocation (for every two electrons transferred, four hydrogen ions are translocated across the cytoplasmic membrane), and thus conserves the redox energy in a proton gradient. In Brucella canis (strain ATCC 23365 / NCTC 10854 / RM-666), this protein is NADH-quinone oxidoreductase subunit D.